Here is a 272-residue protein sequence, read N- to C-terminus: Cell division protein DivIB (272 aa).

Residues 1 to 21 (MRLSSHGKKTVSTSNNPVFNR) are Cytoplasmic-facing. The helical transmembrane segment at 22 to 42 (IGLFFTAAILFALFLQMLFFL) threads the bilayer. Residues 43-115 (RPWQDIKETK…GTAIIRVNEN (73 aa)) form the POTRA domain. The Extracellular segment spans residues 43-272 (RPWQDIKETK…SSSKSSNSSK (230 aa)). A disordered region spans residues 253–272 (LSSLSSDKSKSSSKSSNSSK).

The protein belongs to the FtsQ/DivIB family. DivIB subfamily.

Its subcellular location is the cell membrane. In terms of biological role, cell division protein that may be involved in stabilizing or promoting the assembly of the division complex. The polypeptide is Cell division protein DivIB (Oenococcus oeni (strain ATCC BAA-331 / PSU-1)).